The primary structure comprises 1847 residues: Cilia- and flagella-associated protein 65 (1847 aa).

Residues 112-132 (FFTIIPQPIFLSPGITLTLPI) traverse the membrane as a helical segment. Residues 805 to 914 (DLKLDTHKSI…VHYRIRLVGM (110 aa)) enclose the MSP domain. The stretch at 1457-1483 (QRELMRQYHKELQEWNEEKARQEVEFT) forms a coiled coil. Residues 1668–1721 (YEGRKSKEQEEDLFGKMPGGQEDDEEEEEDEEEAEEEEEEIEEEMSKDEEDIDK) are disordered. Residues 1688 to 1720 (QEDDEEEEEDEEEAEEEEEEIEEEMSKDEEDID) are compositionally biased toward acidic residues.

Belongs to the CFAP65 family. As to quaternary structure, interacts with CFAP47. In terms of tissue distribution, predominantly expressed in testis. Highly expressed in round and elongating spermatids. Expressed also in certain ciliated organs, such as the brain, lung and kidney.

It is found in the cell projection. It localises to the cilium. The protein localises to the flagellum membrane. Its subcellular location is the cytoplasmic vesicle. The protein resides in the secretory vesicle. It is found in the acrosome membrane. It localises to the cytoplasm. Plays a role in flagellar formation and sperm motility. The sequence is that of Cilia- and flagella-associated protein 65 from Mus musculus (Mouse).